We begin with the raw amino-acid sequence, 85 residues long: Protein Vpu (85 aa).

Residues 1–7 lie on the Extracellular side of the membrane; sequence MHQENLL. A helical membrane pass occupies residues 8 to 28; that stretch reads ALIALSALCLINVLIWLFNLR. Over 29-85 the chain is Cytoplasmic; it reads IYLVQRKQDRREQEILERLRRIKEIRDDSDYESNEEEQQEVMELIHSHGFANPMFEL.

It belongs to the HIV-1 VPU protein family. In terms of assembly, homopentamer. Interacts with host CD4 and BRTC; these interactions induce proteasomal degradation of CD4. Interacts with host BST2; this interaction leads to the degradation of host BST2. Interacts with host FBXW11. Interacts with host AP1M1; this interaction plays a role in the mistrafficking and subsequent degradation of host BST2. Interacts with host RANBP2; this interaction allows Vpu to down-regulate host BLM sumoylation. In terms of processing, phosphorylated by host CK2. This phosphorylation is necessary for interaction with human BTRC and degradation of CD4.

Its subcellular location is the host membrane. With respect to regulation, ion channel activity is inhibited by hexamethylene amiloride in vitro. Its function is as follows. Enhances virion budding by targeting host CD4 and Tetherin/BST2 to proteasome degradation. Degradation of CD4 prevents any unwanted premature interactions between viral Env and its host receptor CD4 in the endoplasmic reticulum. Degradation of antiretroviral protein Tetherin/BST2 is important for virion budding, as BST2 tethers new viral particles to the host cell membrane. Mechanistically, Vpu bridges either CD4 or BST2 to BTRC, a substrate recognition subunit of the Skp1/Cullin/F-box protein E3 ubiquitin ligase, induces their ubiquitination and subsequent proteasomal degradation. The alteration of the E3 ligase specificity by Vpu seems to promote the degradation of host IKBKB, leading to NF-kappa-B down-regulation and subsequent apoptosis. Acts as a viroporin that forms an oligomeric ion channel in membranes. Modulates the host DNA repair mechanisms to promote degradation of nuclear viral cDNA in cells that are already productively infected in order to suppress immune sensing and proviral hyper-integration (superinfection). Manipulates PML-NBs and modulates SUMOylation of host BLM protein thereby enhancing its DNA-end processing activity toward viral unintegrated linear DNA. Also inhibits RAD52-mediated homologous repair of viral cDNA, preventing the generation of dead-end circular forms of single copies of the long terminal repeat and permitting sustained nucleolytic attack. The protein is Protein Vpu of Human immunodeficiency virus type 1 group O (isolate MVP5180) (HIV-1).